A 139-amino-acid polypeptide reads, in one-letter code: D-ribose pyranase (139 aa).

Catalysis depends on H20, which acts as the Proton donor. Substrate-binding positions include D28, H106, and 128–130 (YAN).

The protein belongs to the RbsD / FucU family. RbsD subfamily. In terms of assembly, homodecamer.

It localises to the cytoplasm. The enzyme catalyses beta-D-ribopyranose = beta-D-ribofuranose. It functions in the pathway carbohydrate metabolism; D-ribose degradation; D-ribose 5-phosphate from beta-D-ribopyranose: step 1/2. In terms of biological role, catalyzes the interconversion of beta-pyran and beta-furan forms of D-ribose. The polypeptide is D-ribose pyranase (Salmonella typhi).